Reading from the N-terminus, the 306-residue chain is uncharacterized protein (306 aa).

N208 is a glycosylation site (N-linked (GlcNAc...) asparagine). Transmembrane regions (helical) follow at residues 218–238 (VFEI…VLFY) and 284–304 (VMLV…KITK).

Its subcellular location is the membrane. This is an uncharacterized protein from Encephalitozoon cuniculi (strain GB-M1) (Microsporidian parasite).